The sequence spans 653 residues: Macrolide export ATP-binding/permease protein MacB (653 aa).

Positions isoleucine 6–proline 244 constitute an ABC transporter domain. Glycine 42 to serine 49 contacts ATP. 4 helical membrane passes run leucine 275–glycine 295, phenylalanine 525–methionine 545, phenylalanine 576–leucine 596, and tryptophan 616–tryptophan 636.

It belongs to the ABC transporter superfamily. Macrolide exporter (TC 3.A.1.122) family. As to quaternary structure, homodimer. Part of the tripartite efflux system MacAB-TolC, which is composed of an inner membrane transporter, MacB, a periplasmic membrane fusion protein, MacA, and an outer membrane component, TolC. The complex forms a large protein conduit and can translocate molecules across both the inner and outer membranes. Interacts with MacA.

It is found in the cell inner membrane. In terms of biological role, part of the tripartite efflux system MacAB-TolC. MacB is a non-canonical ABC transporter that contains transmembrane domains (TMD), which form a pore in the inner membrane, and an ATP-binding domain (NBD), which is responsible for energy generation. Confers resistance against macrolides. In Sodalis glossinidius (strain morsitans), this protein is Macrolide export ATP-binding/permease protein MacB.